The sequence spans 1087 residues: Gelsolin-related protein of 125 kDa (1087 aa).

A disordered region spans residues 1–40 (MEEDNIVDSKEIENNVEDKKEETPSSSPSPSSSLQQQQEE). Residues 7-23 (VDSKEIENNVEDKKEET) are compositionally biased toward basic and acidic residues. A compositionally biased stretch (low complexity) spans 24-40 (PSSSPSPSSSLQQQQEE). Gelsolin-like repeat units follow at residues 73-146 (PFHF…PTFL), 183-286 (FLFK…FSKW), 335-442 (GKLL…FGTE), and 465-538 (TQLF…DNFW). The stretch at 550 to 598 (INTFINENKEEKEKEEEEKEEEEEEEEEEEEEEEEEKDNNKTTTIIKHL) forms a coiled coil. Residues 555 to 592 (NENKEEKEKEEEEKEEEEEEEEEEEEEEEEEKDNNKTT) are disordered. Acidic residues predominate over residues 562 to 586 (EKEEEEKEEEEEEEEEEEEEEEEEK). The Gelsolin-like 5 repeat unit spans residues 614–692 (IFKADQINPF…EQYNESPLFK (79 aa)). Positions 710-912 (IISYKQKLAE…ETVNEENEVG (203 aa)) form a coiled coil. Basic and acidic residues-rich tracts occupy residues 732–770 (KQQQEQEQEQQQKENNKIVEEVKEEVKEEDVKEEVKEEE), 779–808 (EEVKEVAKEETKEEIKEEVNDEATEVKEVN), 817–840 (EEVKEEVKVEVKEEEVKGEAKEEE), and 849–900 (EEVK…KVNE). A disordered region spans residues 732 to 1087 (KQQQEQEQEQ…HNRSSSLTHA (356 aa)). The segment covering 901–910 (ENETVNEENE) has biased composition (acidic residues). 2 stretches are compositionally biased toward polar residues: residues 925-939 (ANSSSTISSPENEGS) and 950-961 (EPITPSVVSSSG). A compositionally biased stretch (basic residues) spans 983–1002 (QGRKGGRKSHGKNQPQHKKN). Positions 1018–1040 (KSLNLDIDNQSFDLNSINNNNSV) are enriched in polar residues. Positions 1047–1065 (SSPLSFSSSSINSNSTHNT) are enriched in low complexity. Residues 1066–1080 (PSKKNKNKNKKKHNR) are compositionally biased toward basic residues.

It belongs to the villin/gelsolin family. In terms of assembly, interacts with rasD and abpC.

Its subcellular location is the cytoplasmic vesicle. Its function is as follows. Involved in phototaxis. Required for coupling photodetection to the locomotory machinery of slugs. May be essential in the natural environment for the propagation of spores. This chain is Gelsolin-related protein of 125 kDa (gnrA), found in Dictyostelium discoideum (Social amoeba).